We begin with the raw amino-acid sequence, 186 residues long: GTP cyclohydrolase 1 (186 aa).

Zn(2+) is bound by residues Cys-78, His-81, and Cys-150.

It belongs to the GTP cyclohydrolase I family. Toroid-shaped homodecamer, composed of two pentamers of five dimers.

It carries out the reaction GTP + H2O = 7,8-dihydroneopterin 3'-triphosphate + formate + H(+). The protein operates within cofactor biosynthesis; 7,8-dihydroneopterin triphosphate biosynthesis; 7,8-dihydroneopterin triphosphate from GTP: step 1/1. The polypeptide is GTP cyclohydrolase 1 (Enterococcus faecalis (strain ATCC 700802 / V583)).